A 77-amino-acid chain; its full sequence is Acyl carrier protein (77 aa).

Residues 1–77 (MSVEAKVKKI…DAIEYIRKKS (77 aa)) enclose the Carrier domain. O-(pantetheine 4'-phosphoryl)serine is present on serine 37.

Belongs to the acyl carrier protein (ACP) family. Post-translationally, 4'-phosphopantetheine is transferred from CoA to a specific serine of apo-ACP by AcpS. This modification is essential for activity because fatty acids are bound in thioester linkage to the sulfhydryl of the prosthetic group.

It is found in the cytoplasm. It participates in lipid metabolism; fatty acid biosynthesis. In terms of biological role, carrier of the growing fatty acid chain in fatty acid biosynthesis. This is Acyl carrier protein from Desulforapulum autotrophicum (strain ATCC 43914 / DSM 3382 / VKM B-1955 / HRM2) (Desulfobacterium autotrophicum).